Here is a 277-residue protein sequence, read N- to C-terminus: Shikimate dehydrogenase (NADP(+)) (277 aa).

Residues 15-17 and threonine 62 contribute to the shikimate site; that span reads SLS. Catalysis depends on lysine 66, which acts as the Proton acceptor. Shikimate contacts are provided by asparagine 87 and aspartate 102. Residues 127 to 131, 151 to 156, and isoleucine 219 each bind NADP(+); these read GAGGA and NRTVDK. Tyrosine 221 provides a ligand contact to shikimate. Residue glycine 242 coordinates NADP(+).

This sequence belongs to the shikimate dehydrogenase family. In terms of assembly, homodimer.

It catalyses the reaction shikimate + NADP(+) = 3-dehydroshikimate + NADPH + H(+). It participates in metabolic intermediate biosynthesis; chorismate biosynthesis; chorismate from D-erythrose 4-phosphate and phosphoenolpyruvate: step 4/7. In terms of biological role, involved in the biosynthesis of the chorismate, which leads to the biosynthesis of aromatic amino acids. Catalyzes the reversible NADPH linked reduction of 3-dehydroshikimate (DHSA) to yield shikimate (SA). This chain is Shikimate dehydrogenase (NADP(+)), found in Bacillus cereus (strain G9842).